A 282-amino-acid chain; its full sequence is Protease HtpX homolog (282 aa).

2 consecutive transmembrane segments (helical) span residues 7–26 (TTVL…GAVG) and 30–49 (GMMI…YWFS). His-131 is a Zn(2+) binding site. Residue Glu-132 is part of the active site. His-135 provides a ligand contact to Zn(2+). 2 consecutive transmembrane segments (helical) span residues 141 to 161 (ILVS…ARMA) and 183 to 203 (LGLV…QLAI). Residue Glu-208 coordinates Zn(2+).

Belongs to the peptidase M48B family. Requires Zn(2+) as cofactor.

The protein localises to the cell inner membrane. In Syntrophobacter fumaroxidans (strain DSM 10017 / MPOB), this protein is Protease HtpX homolog.